Reading from the N-terminus, the 297-residue chain is UDP-N-acetylenolpyruvoylglucosamine reductase (297 aa).

The 165-residue stretch at 27–191 folds into the FAD-binding PCMH-type domain; sequence TGGNADIFVM…LDATFSLELE (165 aa). The active site involves Arg170. Ser220 functions as the Proton donor in the catalytic mechanism. Glu290 is an active-site residue.

Belongs to the MurB family. The cofactor is FAD.

It is found in the cytoplasm. It carries out the reaction UDP-N-acetyl-alpha-D-muramate + NADP(+) = UDP-N-acetyl-3-O-(1-carboxyvinyl)-alpha-D-glucosamine + NADPH + H(+). Its pathway is cell wall biogenesis; peptidoglycan biosynthesis. In terms of biological role, cell wall formation. The sequence is that of UDP-N-acetylenolpyruvoylglucosamine reductase from Listeria welshimeri serovar 6b (strain ATCC 35897 / DSM 20650 / CCUG 15529 / CIP 8149 / NCTC 11857 / SLCC 5334 / V8).